The primary structure comprises 146 residues: Hemoglobin subunit beta-2 (146 aa).

Positions 2-146 (HWTAEEKQLV…VAHALAYHYH (145 aa)) constitute a Globin domain. Residues His63 and His92 each contribute to the heme b site.

This sequence belongs to the globin family. As to quaternary structure, there are three forms of hemoglobin in Sphenodon: A, A' and D. Hb A is a tetramer of two alpha-A and two beta-1, Hb A' is a tetramer of two alpha-a and two beta-2, Hb D is a tetramer of two alpha-D and two beta-2.

Functionally, involved in oxygen transport from the lung to the various peripheral tissues. The polypeptide is Hemoglobin subunit beta-2 (HBB2) (Sphenodon punctatus (Tuatara)).